The following is a 465-amino-acid chain: VGFKAGVKEYKLTYYTPTYETKDTDILAAFRVTPQPGVPPEEAGAAVAAESSTGTWITVWTDGLTSLDRYKGRCYHIEPVAGEESQFIAYVAYPLDLFEEGSVTNMFTSIVGNVFGFKALRALRLEDLRIPVAYVKTFQGPPHGIQVERDKLNKYGRPLLGCTIKPKLGLSAKNYGRAVYECLRGGLDFTKDDENVNSQPFMRWRDRFLFCAEALYKAQAETGEIKGHYLNATAGTCEEMMKRAIFARELGVPIVMHDYLTGGFTANTSLAHYCRDNGLLLHIHRAMHAVIDRQKNHGIHFRVLAKALRMSGGDHIHSGTVVGKLEGEREITLGFVDLLRDDFVEKDRSRGIYFTQDWVSLPGVLPVASGGIHVWHMPALTEIFGDDSVLQFGGGTLGHPWGNAPGAVANRVALEACVQARNEGRDLAREGNEIIREASKWSPELAAACEVWKEIKFEFEAMDTL.

Residue lysine 4 is modified to N6,N6,N6-trimethyllysine. 2 residues coordinate substrate: asparagine 113 and threonine 163. Lysine 165 (proton acceptor) is an active-site residue. Lysine 167 provides a ligand contact to substrate. Residues lysine 191, aspartate 193, and glutamate 194 each coordinate Mg(2+). Lysine 191 carries the N6-carboxylysine modification. Histidine 284 acts as the Proton acceptor in catalysis. Arginine 285, histidine 317, and serine 369 together coordinate substrate.

This sequence belongs to the RuBisCO large chain family. Type I subfamily. As to quaternary structure, heterohexadecamer of 8 large chains and 8 small chains; disulfide-linked. The disulfide link is formed within the large subunit homodimers. Mg(2+) is required as a cofactor. Post-translationally, the disulfide bond which can form in the large chain dimeric partners within the hexadecamer appears to be associated with oxidative stress and protein turnover.

The protein resides in the plastid. The protein localises to the chloroplast. It carries out the reaction 2 (2R)-3-phosphoglycerate + 2 H(+) = D-ribulose 1,5-bisphosphate + CO2 + H2O. The catalysed reaction is D-ribulose 1,5-bisphosphate + O2 = 2-phosphoglycolate + (2R)-3-phosphoglycerate + 2 H(+). In terms of biological role, ruBisCO catalyzes two reactions: the carboxylation of D-ribulose 1,5-bisphosphate, the primary event in carbon dioxide fixation, as well as the oxidative fragmentation of the pentose substrate in the photorespiration process. Both reactions occur simultaneously and in competition at the same active site. The protein is Ribulose bisphosphate carboxylase large chain of Cornus florida (Flowering dogwood).